A 330-amino-acid polypeptide reads, in one-letter code: Ferredoxin--NADP reductase (330 aa).

The FAD site is built by Glu35, Gln43, Tyr48, Val90, Phe123, Asp285, and Thr326.

Belongs to the ferredoxin--NADP reductase type 2 family. As to quaternary structure, homodimer. It depends on FAD as a cofactor.

The catalysed reaction is 2 reduced [2Fe-2S]-[ferredoxin] + NADP(+) + H(+) = 2 oxidized [2Fe-2S]-[ferredoxin] + NADPH. The protein is Ferredoxin--NADP reductase of Streptococcus equi subsp. zooepidemicus (strain MGCS10565).